Reading from the N-terminus, the 270-residue chain is 3-methyl-2-oxobutanoate hydroxymethyltransferase (270 aa).

Mg(2+) contacts are provided by D43 and D82. Residues 43–44, D82, and K112 each bind 3-methyl-2-oxobutanoate; that span reads DS. Position 114 (E114) interacts with Mg(2+). E179 acts as the Proton acceptor in catalysis.

The protein belongs to the PanB family. As to quaternary structure, homodecamer; pentamer of dimers. Requires Mg(2+) as cofactor.

It is found in the cytoplasm. It carries out the reaction 3-methyl-2-oxobutanoate + (6R)-5,10-methylene-5,6,7,8-tetrahydrofolate + H2O = 2-dehydropantoate + (6S)-5,6,7,8-tetrahydrofolate. It participates in cofactor biosynthesis; (R)-pantothenate biosynthesis; (R)-pantoate from 3-methyl-2-oxobutanoate: step 1/2. Functionally, catalyzes the reversible reaction in which hydroxymethyl group from 5,10-methylenetetrahydrofolate is transferred onto alpha-ketoisovalerate to form ketopantoate. The polypeptide is 3-methyl-2-oxobutanoate hydroxymethyltransferase (Staphylococcus saprophyticus subsp. saprophyticus (strain ATCC 15305 / DSM 20229 / NCIMB 8711 / NCTC 7292 / S-41)).